Reading from the N-terminus, the 317-residue chain is Ribonuclease Z (317 aa).

7 residues coordinate Zn(2+): His61, His63, Asp65, His66, His153, Asp221, and His280. The active-site Proton acceptor is Asp65.

This sequence belongs to the RNase Z family. Homodimer. Requires Zn(2+) as cofactor.

It catalyses the reaction Endonucleolytic cleavage of RNA, removing extra 3' nucleotides from tRNA precursor, generating 3' termini of tRNAs. A 3'-hydroxy group is left at the tRNA terminus and a 5'-phosphoryl group is left at the trailer molecule.. In terms of biological role, zinc phosphodiesterase, which displays some tRNA 3'-processing endonuclease activity. Probably involved in tRNA maturation, by removing a 3'-trailer from precursor tRNA. This chain is Ribonuclease Z, found in Alkaliphilus oremlandii (strain OhILAs) (Clostridium oremlandii (strain OhILAs)).